The following is a 102-amino-acid chain: Small ribosomal subunit protein uS10 (102 aa).

This sequence belongs to the universal ribosomal protein uS10 family. Part of the 30S ribosomal subunit.

In terms of biological role, involved in the binding of tRNA to the ribosomes. In Streptococcus thermophilus (strain ATCC BAA-250 / LMG 18311), this protein is Small ribosomal subunit protein uS10.